The sequence spans 201 residues: uncharacterized protein (201 aa).

The protein belongs to the mimivirus L885/R898 family.

This is an uncharacterized protein from Acanthamoeba polyphaga (Amoeba).